Consider the following 1657-residue polypeptide: Alsin (1657 aa).

RCC1 repeat units lie at residues 59-108 (DGEV…AVTD), 109-167 (NGVA…ALSI), and 169-218 (REIW…ALVQ). The tract at residues 432–480 (TGAQAGSSAIGPEGLKDSREEQVKQESMQGKKSSSLVDIREEETEGGSR) is disordered. A compositionally biased stretch (basic and acidic residues) spans 445–455 (GLKDSREEQVK). Residues 456 to 467 (QESMQGKKSSSL) are compositionally biased toward polar residues. A phosphoserine mark is found at Ser-465, Ser-466, Ser-483, and Ser-492. Thr-510 carries the phosphothreonine modification. 2 RCC1 repeats span residues 525 to 576 (RTEV…ALTA) and 578 to 627 (SQVY…FLVD). Position 533 is an N6-acetyllysine (Lys-533). Residues 690–885 (GYIASLHELA…ECLALHLGRK (196 aa)) form the DH domain. Residues 901 to 1007 (GKMTDSLRKP…RAISQAVDQA (107 aa)) enclose the PH domain. 8 MORN repeats span residues 1049–1071 (YDGRWLSGKPHGRGVLKWPDGKM), 1072–1094 (YSGMFRNGLEDGYGEYRIPNKAM), 1100–1122 (YVGHWKEGKMCGQGVYSYASGEV), 1123–1145 (FEGCFQDNMRHGHGLLRSGKLTS), 1151–1173 (FIGQWVMDKKAGYGVFDDITRGE), 1175–1197 (YMGMWQDDVCQGNGVVVTQFGLY), 1198–1220 (YEGNFHLNKMMGNGVLLSEDDTI), and 1221–1244 (YEGEFSDDWTLSGKGTLTMPNGDY). Position 1335 is a phosphoserine (Ser-1335). One can recognise a VPS9 domain in the interval 1513 to 1657 (KQPDIALLGF…YYQIQREKLN (145 aa)).

Forms a heteromeric complex with ALS2CL. Interacts with ALS2CL.

Its function is as follows. May act as a GTPase regulator. Controls survival and growth of spinal motoneurons. The polypeptide is Alsin (ALS2) (Homo sapiens (Human)).